The chain runs to 138 residues: Basic phospholipase A2 homolog Tpu-K49a (138 aa).

A signal peptide spans 1-16 (MRTLWIMAVLLVGVEG). 6 disulfide bridges follow: Cys42-Cys131, Cys44-Cys60, Cys59-Cys111, Cys65-Cys138, Cys66-Cys104, and Cys91-Cys102. Residues 121–133 (KKERINTKIFCKK) are important for membrane-damaging activities in eukaryotes and bacteria; heparin-binding.

As to quaternary structure, monomer. As to expression, expressed by the venom gland.

The protein resides in the secreted. Snake venom phospholipase A2 homolog that lacks catalytic activity. Induces local edema a few hours after injection in the hind foot. Is myotoxic. A model of myotoxic mechanism has been proposed: an apo Lys49-PLA2 is activated by the entrance of a hydrophobic molecule (e.g. fatty acid) at the hydrophobic channel of the protein leading to a reorientation of a monomer. This reorientation causes a transition between 'inactive' to 'active' states, causing alignment of C-terminal and membrane-docking sites (MDoS) side-by-side and putting the membrane-disruption sites (MDiS) in the same plane, exposed to solvent and in a symmetric position for both monomers. The MDoS region stabilizes the toxin on membrane by the interaction of charged residues with phospholipid head groups. Subsequently, the MDiS region destabilizes the membrane with penetration of hydrophobic residues. This insertion causes a disorganization of the membrane, allowing an uncontrolled influx of ions (i.e. calcium and sodium), and eventually triggering irreversible intracellular alterations and cell death. The protein is Basic phospholipase A2 homolog Tpu-K49a of Craspedocephalus puniceus (Flat-nosed pitviper).